The primary structure comprises 206 residues: Small ribosomal subunit protein uS4 (206 aa).

In terms of domain architecture, S4 RNA-binding spans 96-156; that stretch reads SRLDNVVYRM…NKSKNQSRIK (61 aa).

This sequence belongs to the universal ribosomal protein uS4 family. In terms of assembly, part of the 30S ribosomal subunit. Contacts protein S5. The interaction surface between S4 and S5 is involved in control of translational fidelity.

Functionally, one of the primary rRNA binding proteins, it binds directly to 16S rRNA where it nucleates assembly of the body of the 30S subunit. With S5 and S12 plays an important role in translational accuracy. The protein is Small ribosomal subunit protein uS4 of Buchnera aphidicola subsp. Acyrthosiphon pisum (strain 5A).